The chain runs to 729 residues: Solute carrier family 15 member 2 (729 aa).

Residues 1–34 (MNPFQKNESKETLFSPVSIEEVPPRPPSPPKKPS) form a disordered region. At 1–57 (MNPFQKNESKETLFSPVSIEEVPPRPPSPPKKPSPTICGSNYPLSIAFIVVNEFCER) the chain is on the cytoplasmic side. At S9 the chain carries Phosphoserine. T12 carries the post-translational modification Phosphothreonine. Over residues 24–33 (PRPPSPPKKP) the composition is skewed to pro residues. A Phosphoserine modification is found at S28. The helical transmembrane segment at 58–78 (FSYYGMKAVLILYFLYFLHWN) threads the bilayer. Residues 79–83 (EDTST) lie on the Extracellular side of the membrane. The helical transmembrane segment at 84–104 (SIYHAFSSLCYFTPILGAAIA) threads the bilayer. The Cytoplasmic segment spans residues 105 to 113 (DSWLGKFKT). A helical membrane pass occupies residues 114 to 134 (IIYLSLVYVLGHVIKSLGALP). At 135-139 (ILGGQ) the chain is on the extracellular side. The helical transmembrane segment at 140–160 (VVHTVLSLIGLSLIALGTGGI) threads the bilayer. Residues 161–183 (KPCVAAFGGDQFEEKHAEERTRY) are Cytoplasmic-facing. The helical transmembrane segment at 184 to 204 (FSVFYLSINAGSLISTFITPM) threads the bilayer. Topologically, residues 205 to 217 (LRGDVQCFGEDCY) are extracellular. A helical transmembrane segment spans residues 218–238 (ALAFGVPGLLMVIALVVFAMG). Residues 239–295 (SKIYNKPPPEGNIVAQVFKCIWFAISNRFKNRSGDIPKRQHWLDWAAEKYPKQLIMD) lie on the Cytoplasmic side of the membrane. A helical membrane pass occupies residues 296–316 (VKALTRVLFLYIPLPMFWALL). Topologically, residues 317–343 (DQQGSRWTLQAIRMNRNLGFFVLQPDQ) are extracellular. A helical transmembrane segment spans residues 344 to 364 (MQVLNPLLVLIFIPLFDFVIY). Residues 365 to 380 (RLVSKCGINFSSLRKM) lie on the Cytoplasmic side of the membrane. A helical membrane pass occupies residues 381–401 (AVGMILACLAFAVAAAVEIKI). Over 402-611 (NEMAPAQPGP…PANKMSIAWQ (210 aa)) the chain is Extracellular. The interval 402–611 (NEMAPAQPGP…PANKMSIAWQ (210 aa)) is extracellular domain (ECD). 5 N-linked (GlcNAc...) asparagine glycosylation sites follow: N435, N472, N528, N567, and N587. The chain crosses the membrane as a helical span at residues 612–632 (LPQYALVTAGEVMFSVTGLEF). The Cytoplasmic segment spans residues 633-643 (SYSQAPSSMKS). A helical transmembrane segment spans residues 644–664 (VLQAAWLLTIAVGNIIVLVVA). The Extracellular segment spans residues 665-674 (QFSGLVQWAE). Residues 675–695 (FILFSCLLLVICLIFSIMGYY) form a helical membrane-spanning segment. The Cytoplasmic segment spans residues 696 to 729 (YVPVKTEDMRGPADKHIPHIQGNMIKLETKKTKL).

It belongs to the major facilitator superfamily. Proton-dependent oligopeptide transporter (POT/PTR) (TC 2.A.17) family. As to quaternary structure, interacts (via extracellular domain region) with trypsin. As to expression, expressed in kidney. Not detected in intestine. Highly expressed in macrophages.

Its subcellular location is the apical cell membrane. The protein resides in the cytoplasmic vesicle. It is found in the phagosome membrane. The protein localises to the cell membrane. The enzyme catalyses a dipeptide(out) + 2 H(+)(out) = a dipeptide(in) + 2 H(+)(in). It catalyses the reaction N-acetyl-D-muramoyl-L-alanyl-D-isoglutamine(out) + 3 H(+)(out) = N-acetyl-D-muramoyl-L-alanyl-D-isoglutamine(in) + 3 H(+)(in). The catalysed reaction is glycyl-L-leucine(out) + 2 H(+)(out) = glycyl-L-leucine(in) + 2 H(+)(in). It carries out the reaction glycyl-L-lysine(out) + 2 H(+)(out) = glycyl-L-lysine(in) + 2 H(+)(in). The enzyme catalyses glycyl-L-glutamate(out) + 3 H(+)(out) = glycyl-L-glutamate(in) + 3 H(+)(in). It catalyses the reaction L-alanyl-L-alanine(out) + 2 H(+)(out) = L-alanyl-L-alanine(in) + 2 H(+)(in). The catalysed reaction is an L-amino acid tripeptide(out) + 2 H(+)(out) = an L-amino acid tripeptide(in) + 2 H(+)(in). It carries out the reaction carnosine(out) + 2 H(+)(out) = carnosine(in) + 2 H(+)(in). In terms of biological role, proton-coupled amino-acid transporter that transports oligopeptides of 2 to 4 amino acids with a preference for dipeptides. Transports neutral and anionic dipeptides with a proton to peptide stoichiometry of 2:1 or 3:1. In kidney, involved in the absorption of circulating di- and tripeptides from the glomerular filtrate. Can also transport beta-lactam antibiotics, such as the aminocephalosporin cefadroxil, and other antiviral and anticancer drugs. Transports the dipeptide-like aminopeptidase inhibitor bestatin. Also able to transport carnosine. Involved in innate immunity by promoting the detection of microbial pathogens by NOD-like receptors (NLRs). Mediates transport of bacterial peptidoglycans across the plasma membrane or, in macrophages, the phagosome membrane: catalyzes the transport of certain bacterial peptidoglycans, such as muramyl dipeptide (MDP), the NOD2 ligand. The polypeptide is Solute carrier family 15 member 2 (Homo sapiens (Human)).